The chain runs to 461 residues: tRNA modification GTPase MnmE (461 aa).

(6S)-5-formyl-5,6,7,8-tetrahydrofolate-binding residues include arginine 23, glutamate 88, and arginine 127. The 161-residue stretch at 223–383 (GLNTVIVGKP…LKECIKNLFF (161 aa)) folds into the TrmE-type G domain. K(+) is bound at residue asparagine 233. Residues 233–238 (NVGKSS), 252–258 (TEIPGTT), and 277–280 (DTAG) each bind GTP. Serine 237 is a Mg(2+) binding site. Residues threonine 252, isoleucine 254, and threonine 257 each contribute to the K(+) site. Threonine 258 is a binding site for Mg(2+). Lysine 461 serves as a coordination point for (6S)-5-formyl-5,6,7,8-tetrahydrofolate.

This sequence belongs to the TRAFAC class TrmE-Era-EngA-EngB-Septin-like GTPase superfamily. TrmE GTPase family. Homodimer. Heterotetramer of two MnmE and two MnmG subunits. K(+) serves as cofactor.

It localises to the cytoplasm. In terms of biological role, exhibits a very high intrinsic GTPase hydrolysis rate. Involved in the addition of a carboxymethylaminomethyl (cmnm) group at the wobble position (U34) of certain tRNAs, forming tRNA-cmnm(5)s(2)U34. The protein is tRNA modification GTPase MnmE of Clostridium botulinum (strain Langeland / NCTC 10281 / Type F).